We begin with the raw amino-acid sequence, 167 residues long: NADH-ubiquinone oxidoreductase chain 6 (167 aa).

A run of 4 helical transmembrane segments spans residues 24-44 (PYFGALGLIVVSLVGCLIILA), 54-74 (LLLIYLGGMMVVFSYCTALVL), 85-105 (VLMKMALGVLVVVFLGYGGYL), and 135-155 (WLLIVFGCLGLFLALLVILEI).

Belongs to the complex I subunit 6 family.

The protein resides in the mitochondrion membrane. It catalyses the reaction a ubiquinone + NADH + 5 H(+)(in) = a ubiquinol + NAD(+) + 4 H(+)(out). Its function is as follows. Core subunit of the mitochondrial membrane respiratory chain NADH dehydrogenase (Complex I) that is believed to belong to the minimal assembly required for catalysis. Complex I functions in the transfer of electrons from NADH to the respiratory chain. The immediate electron acceptor for the enzyme is believed to be ubiquinone. The protein is NADH-ubiquinone oxidoreductase chain 6 (MT-ND6) of Myxine glutinosa (Atlantic hagfish).